The primary structure comprises 1726 residues: Transcription elongation factor SPT6 (1726 aa).

Composition is skewed to acidic residues over residues 1-14, 32-49, and 59-80; these read MSDFVESEAEESEE, EEEDDDEEEEEENLDDQD, and NDDDDEEEGEEDEGSDSGDSED. The interval 1-197 is disordered; sequence MSDFVESEAE…DDGQPLKKPK (197 aa). Ser2 carries the N-acetylserine modification. The segment at 2–485 is interaction with IWS1; that stretch reads SDFVESEAEE…PKMQNAAKAS (484 aa). The segment at 2 to 916 is interaction with PAAF1; sequence SDFVESEAEE…PPVLRQAVSL (915 aa). Residues 3 to 51 adopt a coiled-coil conformation; the sequence is DFVESEAEESEEEYNHEGEVVPRVTKKFVEEEDDDEEEEEENLDDQDER. 2 positions are modified to phosphoserine: Ser7 and Ser12. 3 positions are modified to phosphoserine: Ser73, Ser78, and Ser91. A compositionally biased stretch (acidic residues) spans 95–105; that stretch reads RLEDDDFDLIE. Over residues 111 to 122 the composition is skewed to basic residues; the sequence is KVKRGQKYRRVK. Ser125 is subject to Phosphoserine. Composition is skewed to acidic residues over residues 126–136, 150–160, and 169–190; these read DDDEDDEEEYG, FQDEEGEEGQE, and PDEEEEDDEESDIDDFIVDDDG. At Ser267 the chain carries Phosphoserine. Residues 317 to 1300 form an interaction with KDM6A region; that stretch reads ADWIYRNAFA…NEWKLPKDTY (984 aa). The disordered stretch occupies residues 489–520; the sequence is LKRIKEDGDEEGEGEEAEDEEQRGPELKQASR. Acidic residues predominate over residues 495–509; the sequence is DGDEEGEGEEAEDEE. Residues 510–520 show a composition bias toward basic and acidic residues; that stretch reads QRGPELKQASR. Lys743 bears the N6-acetyllysine mark. Residues 1213–1282 form the S1 motif domain; it reads WNHFDSGSCP…EKFSADLTCR (70 aa). Positions 1325-1431 constitute an SH2 domain; the sequence is YIKRVIAHPS…FARDLLNHKY (107 aa). Tyr1515 is modified (phosphotyrosine). Thr1523 is modified (phosphothreonine). Position 1526 is a phosphoserine (Ser1526). Thr1530 and Thr1532 each carry phosphothreonine. The residue at position 1535 (Ser1535) is a Phosphoserine. Thr1539 bears the Phosphothreonine mark. The interaction with histone H2B and H3 stretch occupies residues 1633–1726; that stretch reads PQYHQLQAST…ATPLLDEMDR (94 aa). Residues 1636–1726 form a disordered region; it reads HQLQASTTPQ…ATPLLDEMDR (91 aa). Residues 1639 to 1664 are compositionally biased toward low complexity; it reads QASTTPQSTQAQPQPSSSSRQRQQQP. Lys1676 is modified (N6-acetyllysine). Thr1697 bears the Phosphothreonine mark. A phosphoserine mark is found at Ser1701 and Ser1703. A phosphothreonine mark is found at Thr1709 and Thr1718.

It belongs to the SPT6 family. In terms of assembly, interacts with RNA polymerase II and the DRB sensitivity-inducing factor complex (DSIF complex), which is composed of SUPT5H and SUPT4H1 or SUPT4H2. Interacts with PAAF1. Interacts with histone H2B and H3. Interacts (via SH2 domain) with POLR2A phosphorylated at 'Ser-2'. Interacts (via SH2 domain) with SETD1A. Interacts with IWS1, KDM6A and AICDA. Interacts with WDR43. Post-translationally, dephosphorylated at Ser-1530 by the PNUTS-PP1 complex during RNA polymerase II transcription pause-release. Ubiquitously expressed.

Its subcellular location is the nucleus. In terms of biological role, histone H3-H4 chaperone that plays a key role in the regulation of transcription elongation and mRNA processing. Enhances the transcription elongation by RNA polymerase II (RNAPII) and is also required for the efficient activation of transcriptional elongation by the HIV-1 nuclear transcriptional activator, Tat. Besides chaperoning histones in transcription, acts to transport and splice mRNA by forming a complex with IWS1 and the C-terminal domain (CTD) of the RNAPII subunit RPB1 (POLR2A). The SUPT6H:IWS1:CTD complex recruits mRNA export factors (ALYREF/THOC4, EXOSC10) as well as histone modifying enzymes (such as SETD2), to ensure proper mRNA splicing, efficient mRNA export and elongation-coupled H3K36 methylation, a signature chromatin mark of active transcription. SUPT6H via its association with SETD1A, regulates both class-switch recombination and somatic hypermutation through formation of H3K4me3 epigenetic marks on activation-induced cytidine deaminase (AICDA) target loci. Promotes the activation of the myogenic gene program by entailing erasure of the repressive H3K27me3 epigenetic mark through stabilization of the chromatin interaction of the H3K27 demethylase KDM6A. The chain is Transcription elongation factor SPT6 (Supt6h) from Mus musculus (Mouse).